The chain runs to 960 residues: ATPase 4, plasma membrane-type (960 aa).

Residues 1-69 are Cytoplasmic-facing; that stretch reads MTTTVEDNRE…EKKESKFLKF (69 aa). Residues 70-89 form a helical membrane-spanning segment; the sequence is LGFMWNPLSWVMEAAAIMAI. Residues 90–101 are Extracellular-facing; sequence ALANGGGKPPDW. A helical transmembrane segment spans residues 102–122; it reads QDFVGIITLLVINSTISFIEE. Topologically, residues 123–251 are cytoplasmic; sequence NNAGNAAAAL…GHFQQVLTAI (129 aa). A helical transmembrane segment spans residues 252-272; it reads GNFCICSIAVGMLIEIVVMYP. At 273–281 the chain is on the extracellular side; sequence IQHRAYRPG. Residues 282–299 traverse the membrane as a helical segment; that stretch reads IDNLLVLLIGGIPIAMPT. At 300-651 the chain is on the cytoplasmic side; the sequence is VLSVTMAIGS…TSRAIFQRMK (352 aa). The 4-aspartylphosphate intermediate role is filled by D337. The Mg(2+) site is built by D596 and D600. A helical transmembrane segment spans residues 652-673; that stretch reads NYTIYAVSITIRIVLGFMLLAL. Topologically, residues 674–678 are extracellular; sequence IWQFD. Residues 679 to 701 traverse the membrane as a helical segment; it reads FPPFMVLIIAILNDGTIMTISKD. Topologically, residues 702–717 are cytoplasmic; it reads RVKPSPLPDSWKLSEI. A helical membrane pass occupies residues 718 to 738; the sequence is FATGVVFGSYMAMMTVIFFWV. Residues 739–763 are Extracellular-facing; that stretch reads SYKTDFFPRTFGVATLEKTAHDDFR. Residues 764-784 form a helical membrane-spanning segment; it reads KLASAIYLQVSIISQALIFVT. Topologically, residues 785–796 are cytoplasmic; it reads RSRSWSFVERPG. Residues 797–817 traverse the membrane as a helical segment; it reads IFLMIAFILAQLVATLIAVYA. The Extracellular segment spans residues 818–825; it reads NWSFAAIE. A helical transmembrane segment spans residues 826 to 846; that stretch reads GIGWGWAGVIWLYNIIFYIPL. The Cytoplasmic portion of the chain corresponds to 847 to 960; sequence DFIKFFIRYA…IETIQQAYTV (114 aa). At T893 the chain carries Phosphothreonine. A Phosphoserine modification is found at S942. Residues 958 to 960 are interaction with 14-3-3 proteins; it reads YTV. Phosphothreonine is present on T959.

This sequence belongs to the cation transport ATPase (P-type) (TC 3.A.3) family. Type IIIA subfamily. As to quaternary structure, binds to 14-3-3 proteins. The binding is induced by phosphorylation of Thr-959. Binding to 14-3-3 proteins activates the H(+)-ATPase. Expressed in guard cells and roots.

It localises to the cell membrane. It catalyses the reaction ATP + H2O + H(+)(in) = ADP + phosphate + 2 H(+)(out). Functionally, the plasma membrane H(+) ATPase of plants and fungi generates a proton gradient that drives the active transport of nutrients by H(+)-symport. The resulting external acidification and/or internal alkinization may mediate growth responses. In Arabidopsis thaliana (Mouse-ear cress), this protein is ATPase 4, plasma membrane-type (AHA4).